The following is a 300-amino-acid chain: Cation-efflux pump FieF (300 aa).

A helical membrane pass occupies residues 24–44; sequence LLIKILAWWYTGSVSILAALV. D45 and D49 together coordinate Zn(2+). A run of 2 helical transmembrane segments spans residues 82–102 and 114–134; these read AALA…LTSI and PGVG…LVTF. Residues H153 and D157 each coordinate Zn(2+). A run of 2 helical transmembrane segments spans residues 156-176 and 178-198; these read SDVM…YGWH and ADAL…LRMG.

It belongs to the cation diffusion facilitator (CDF) transporter (TC 2.A.4) family. FieF subfamily. In terms of assembly, homodimer.

It is found in the cell inner membrane. It carries out the reaction Zn(2+)(in) + H(+)(out) = Zn(2+)(out) + H(+)(in). The catalysed reaction is Cd(2+)(in) + H(+)(out) = Cd(2+)(out) + H(+)(in). It catalyses the reaction Fe(2+)(in) + H(+)(out) = Fe(2+)(out) + H(+)(in). Its function is as follows. Divalent metal cation transporter which exports Zn(2+), Cd(2+) and possibly Fe(2+). May be involved in zinc and iron detoxification by efflux. The chain is Cation-efflux pump FieF from Salmonella agona (strain SL483).